The following is a 376-amino-acid chain: Chaperone protein DnaJ (376 aa).

The J domain maps to 5–70 (DYYEILGVSK…QKRAAYDQYG (66 aa)). The CR-type zinc finger occupies 131–209 (GVTKEIRIPT…CHGHGRVERS (79 aa)). Zn(2+) contacts are provided by Cys-144, Cys-147, Cys-161, Cys-164, Cys-183, Cys-186, Cys-197, and Cys-200. 4 CXXCXGXG motif repeats span residues 144–151 (CDVCHGSG), 161–168 (CPTCHGSG), 183–190 (CPHCQGRG), and 197–204 (CNKCHGHG).

This sequence belongs to the DnaJ family. Homodimer. It depends on Zn(2+) as a cofactor.

Its subcellular location is the cytoplasm. Participates actively in the response to hyperosmotic and heat shock by preventing the aggregation of stress-denatured proteins and by disaggregating proteins, also in an autonomous, DnaK-independent fashion. Unfolded proteins bind initially to DnaJ; upon interaction with the DnaJ-bound protein, DnaK hydrolyzes its bound ATP, resulting in the formation of a stable complex. GrpE releases ADP from DnaK; ATP binding to DnaK triggers the release of the substrate protein, thus completing the reaction cycle. Several rounds of ATP-dependent interactions between DnaJ, DnaK and GrpE are required for fully efficient folding. Also involved, together with DnaK and GrpE, in the DNA replication of plasmids through activation of initiation proteins. The chain is Chaperone protein DnaJ from Escherichia coli O157:H7 (strain EC4115 / EHEC).